The chain runs to 727 residues: ATP-dependent RNA helicase Ddx1 (727 aa).

In terms of domain architecture, Helicase ATP-binding spans 2–428; sequence TAFEEFGVLP…AERLMHFPTW (427 aa). 46–53 serves as a coordination point for ATP; sequence AETGSGKT. The B30.2/SPRY domain maps to 69-246; sequence RDLEEGKAGK…MQFNFGKTDF (178 aa). A DEAD box motif is present at residues 370 to 373; the sequence is DEAD. Residues 483–676 form the Helicase C-terminal domain; the sequence is TLSQAVKLLK…QVDKTMDVPV (194 aa).

The protein belongs to the DEAD box helicase family. DDX1 subfamily.

The enzyme catalyses ATP + H2O = ADP + phosphate + H(+). Its function is as follows. Acts as an ATP-dependent RNA helicase, able to unwind both RNA-RNA and RNA-DNA duplexes. Possesses 5' single-stranded RNA overhang nuclease activity. This chain is ATP-dependent RNA helicase Ddx1 (Ddx1), found in Drosophila melanogaster (Fruit fly).